Reading from the N-terminus, the 153-residue chain is Ribosomal RNA large subunit methyltransferase H (153 aa).

Residues Leu63, Gly102, and 121 to 126 (FGKITL) each bind S-adenosyl-L-methionine.

This sequence belongs to the RNA methyltransferase RlmH family. In terms of assembly, homodimer.

It localises to the cytoplasm. It carries out the reaction pseudouridine(1915) in 23S rRNA + S-adenosyl-L-methionine = N(3)-methylpseudouridine(1915) in 23S rRNA + S-adenosyl-L-homocysteine + H(+). Its function is as follows. Specifically methylates the pseudouridine at position 1915 (m3Psi1915) in 23S rRNA. The sequence is that of Ribosomal RNA large subunit methyltransferase H from Sulfurovum sp. (strain NBC37-1).